A 575-amino-acid chain; its full sequence is Intermediate filament protein ifa-1 (575 aa).

2 disordered regions span residues Met-1 to Val-30 and Ser-45 to Glu-72. The segment at Met-1–Glu-72 is head. The span at Glu-7 to Ser-17 shows a compositional bias: polar residues. A compositionally biased stretch (basic and acidic residues) spans Arg-63 to Glu-72. The IF rod domain occupies Glu-69–Ala-422. The interval Met-73–Leu-104 is coil 1A. The tract at residues Arg-105–Met-118 is linker 1. Residues Tyr-119–Leu-256 form a coil 1B region. Positions Gln-257–Asn-274 are linker 12. The interval Glu-275–Ala-422 is coil 2. Positions Gly-423–Gln-572 are tail. In terms of domain architecture, LTD spans Ser-455–Gln-572.

It belongs to the intermediate filament family. Forms some heteromeric filaments with ifb-1. Isoform d is abundantly expressed in the marginal cells of the pharynx, forming apicobasally oriented thick filament bundles that are attached to the apical and basal plasma membrane by hemi-adherens junctions. Expression of isoform c is also seen in the excretory cells and in the uterus. Isoform c is detectable in the amphid sensory neurins and the pharyngeal-intestinal valve. Both isoform c and isoform d are expressed in the rectum and vulva and in some neurons of the tail. In larvae, expression is seen in the excretory cell, the vulva, the rectum and in the thick filament bundles of the pharynx. Expression in pharynx begins in late embryos.

Its subcellular location is the cytoplasm. Functionally, cytoplasmic intermediate filaments make up the structural component of the cytoskeleton providing mechanical strength to cells. Essential protein required during embryogenesis especially for survival past the L1 larva stage, involved in intestine morphogenesis. In Caenorhabditis elegans, this protein is Intermediate filament protein ifa-1 (ifa-1).